Consider the following 230-residue polypeptide: Cytochrome c oxidase subunit 2 (230 aa).

Over 1–14 (MAHPSQLGFQDAAS) the chain is Mitochondrial intermembrane. Residues 15–45 (PVMEELLHFHDHALMIVLLISTLVLYIIVAM) form a helical membrane-spanning segment. Topologically, residues 46 to 59 (VSTKLTNMYILDSQ) are mitochondrial matrix. Residues 60-87 (EIEIVWTVLPAVILILIALPSLRILYLM) traverse the membrane as a helical segment. Residues 88–230 (DEINDPHLTI…KWSTMMLEDA (143 aa)) are Mitochondrial intermembrane-facing. Residues His-161, Cys-196, Glu-198, Cys-200, His-204, and Met-207 each coordinate Cu cation. A Mg(2+)-binding site is contributed by Glu-198.

This sequence belongs to the cytochrome c oxidase subunit 2 family. Component of the cytochrome c oxidase (complex IV, CIV), a multisubunit enzyme composed of 14 subunits. The complex is composed of a catalytic core of 3 subunits MT-CO1, MT-CO2 and MT-CO3, encoded in the mitochondrial DNA, and 11 supernumerary subunits COX4I, COX5A, COX5B, COX6A, COX6B, COX6C, COX7A, COX7B, COX7C, COX8 and NDUFA4, which are encoded in the nuclear genome. The complex exists as a monomer or a dimer and forms supercomplexes (SCs) in the inner mitochondrial membrane with NADH-ubiquinone oxidoreductase (complex I, CI) and ubiquinol-cytochrome c oxidoreductase (cytochrome b-c1 complex, complex III, CIII), resulting in different assemblies (supercomplex SCI(1)III(2)IV(1) and megacomplex MCI(2)III(2)IV(2)). Found in a complex with TMEM177, COA6, COX18, COX20, SCO1 and SCO2. Interacts with TMEM177 in a COX20-dependent manner. Interacts with COX20. Interacts with COX16. Cu cation is required as a cofactor.

It is found in the mitochondrion inner membrane. The catalysed reaction is 4 Fe(II)-[cytochrome c] + O2 + 8 H(+)(in) = 4 Fe(III)-[cytochrome c] + 2 H2O + 4 H(+)(out). Functionally, component of the cytochrome c oxidase, the last enzyme in the mitochondrial electron transport chain which drives oxidative phosphorylation. The respiratory chain contains 3 multisubunit complexes succinate dehydrogenase (complex II, CII), ubiquinol-cytochrome c oxidoreductase (cytochrome b-c1 complex, complex III, CIII) and cytochrome c oxidase (complex IV, CIV), that cooperate to transfer electrons derived from NADH and succinate to molecular oxygen, creating an electrochemical gradient over the inner membrane that drives transmembrane transport and the ATP synthase. Cytochrome c oxidase is the component of the respiratory chain that catalyzes the reduction of oxygen to water. Electrons originating from reduced cytochrome c in the intermembrane space (IMS) are transferred via the dinuclear copper A center (CU(A)) of subunit 2 and heme A of subunit 1 to the active site in subunit 1, a binuclear center (BNC) formed by heme A3 and copper B (CU(B)). The BNC reduces molecular oxygen to 2 water molecules using 4 electrons from cytochrome c in the IMS and 4 protons from the mitochondrial matrix. In Oncorhynchus mykiss (Rainbow trout), this protein is Cytochrome c oxidase subunit 2 (mt-co2).